Reading from the N-terminus, the 266-residue chain is MMSWLTIGVILGLVQGITEFLPVSSTGHLIIVAKFLHFTGSKASVFEVAVQLGSIMAVVVIYWNRFIGLIRPEKNKKFTGLYGIWLLFLTTLPPGIIGFLFHSYIKTLFTIPSVIAALTTGSIFMLISEQLCRNISQRIVTLDELTPKTALGIGFFECLALWPGFSRSAATIMGGMLLGAKRHLAAEYSFIAAVPVMFAATGYDLLKNWDLFTANDLPLFITGMICAFLAAWITIKVFILLISKISLRPFAYYRLLLAFIVYLCIK.

The next 8 membrane-spanning stretches (helical) occupy residues 1–21 (MMSW…TEFL), 43–63 (ASVF…VIYW), 81–101 (LYGI…GFLF), 107–127 (TLFT…FMLI), 145–165 (LTPK…WPGF), 183–203 (HLAA…ATGY), 219–239 (LFIT…KVFI), and 245–265 (ISLR…YLCI).

The protein belongs to the UppP family.

The protein localises to the cell membrane. The catalysed reaction is di-trans,octa-cis-undecaprenyl diphosphate + H2O = di-trans,octa-cis-undecaprenyl phosphate + phosphate + H(+). Catalyzes the dephosphorylation of undecaprenyl diphosphate (UPP). Confers resistance to bacitracin. The polypeptide is Undecaprenyl-diphosphatase (Lawsonia intracellularis (strain PHE/MN1-00)).